We begin with the raw amino-acid sequence, 296 residues long: Aldo-keto reductase MYCFIDRAFT_156381 (296 aa).

Asp-14 is an NADP(+) binding site. The Proton donor role is filled by Tyr-19. His-83 provides a ligand contact to substrate. NADP(+)-binding positions include Cys-113–Asn-114, Gln-139, Ser-168–Arg-178, and Arg-191. Residue Tyr-201 participates in substrate binding. An NADP(+)-binding site is contributed by Ser-255–Asn-263.

The protein belongs to the aldo/keto reductase family. Aldo/keto reductase 2 subfamily.

It participates in secondary metabolite biosynthesis. Its function is as follows. Aldo-keto reductase; part of the gene cluster that mediates the biosynthesis of an emodin derivative that may be involved in black Sigatoka disease of banana. The pathway begins with the synthesis of atrochrysone thioester by the polyketide synthase PKS8-1. The atrochrysone carboxyl ACP thioesterase MYCFIDRAFT_190111 then breaks the thioester bond and releases the atrochrysone carboxylic acid from PKS8-1. The decarboxylase MYCFIDRAFT_34057 then catalyzes the concerted decarboxylation-elimination required to convert atochrysone carboxylic acid into emodin anthrone, which is further oxidized to emodin by the anthrone oxygenase MYCFIDRAFT_34418. The functions of the other tailoring enzymes as well as the final product of the cluster have still to be identified. This chain is Aldo-keto reductase MYCFIDRAFT_156381, found in Pseudocercospora fijiensis (strain CIRAD86) (Black leaf streak disease fungus).